A 305-amino-acid polypeptide reads, in one-letter code: RNA-binding protein with serine-rich domain 1 (305 aa).

Over residues 1–10 the composition is skewed to basic residues; sequence MDLSGVKKKS. The necessary for interaction with SRP54, nuclear localization and exon-skipping stretch occupies residues 1-161; it reads MDLSGVKKKS…KRRSPSPKPT (161 aa). The segment at 1–170 is disordered; sequence MDLSGVKKKS…TKVHIGRLTR (170 aa). The tract at residues 1-220 is necessary for interaction with the cleaved p110 isoform of CDC2L1; that stretch reads MDLSGVKKKS…ENPDEAEKAL (220 aa). Glycyl lysine isopeptide (Lys-Gly) (interchain with G-Cter in SUMO2) cross-links involve residues K7 and K15. Basic and acidic residues predominate over residues 33 to 59; it reads DRSDEKSKDRSKDKGTTKESSEKDRGR. Position 53 is a phosphoserine (S53). A compositionally biased stretch (low complexity) spans 68–126; that stretch reads ASSGSSSTRSRSSSTSSSGSSTSTGSSSGSSSSSASSRSGSSSTSRSSSSSSSSGSPSP. The segment at 69 to 121 is necessary for interactions with UPF2 and UPF3B and UPF2-dependent NMD; the sequence is SSGSSSTRSRSSSTSSSGSSTSTGSSSGSSSSSASSRSGSSSTSRSSSSSSSS. Basic residues-rich tracts occupy residues 127 to 143 and 151 to 167; these read SRRR…KSKP and RKRR…HIGR. Residues S155 and S157 each carry the phosphoserine modification. The tract at residues 156-242 is necessary for interaction with PNN and exon-skipping; it reads PSPKPTKVHI…ITATAVLAPW (87 aa). The interaction with SAP18 and ACIN1 stretch occupies residues 159–244; that stretch reads KPTKVHIGRL…ATAVLAPWPR (86 aa). T161 carries the post-translational modification Phosphothreonine. The RRM domain maps to 161–240; sequence TKVHIGRLTR…QEITATAVLA (80 aa). K218 carries the N6-acetyllysine modification. Residues 238-305 are necessary for interaction with TRA2B, nuclear localization and exon-skipping; sequence VLAPWPRPPP…RSRSSSNSSR (68 aa). The interval 240-305 is disordered; it reads APWPRPPPRR…RSRSSSNSSR (66 aa). Pro residues predominate over residues 242–262; that stretch reads WPRPPPRRFSPPRRMLPPPPM. The span at 266 to 298 shows a compositional bias: basic residues; the sequence is SPPRMRRRSRSPRRRSPVRRRSRSPGRRRHRSR.

Belongs to the splicing factor SR family. In terms of assembly, found in mRNA splicing-dependent exon junction complexes (EJC). Found in a post-splicing complex with NXF1, RBM8A, UPF1, UPF2, UPF3A, UPF3B and RNPS1. Component of the heterotrimeric ASAP (apoptosis- and splicing-associated protein) and PSAP complexes consisting of RNPS1, SAP18 and either ACIN1 or PNN, respectively; the ASAP and PSAP complexes probably are formed mutually exclusive. Component of the active spliceosome. Associates with polysomes. Interacts with the cleaved p110 isoform of CDC2L1, CSNK2A1, PNN, SART3, SRP54, SRRM1 and TRA2B/SFRS10. Post-translationally, phosphorylated on one or more of the four Ser/Thr residues (Ser-43, Thr-49, Ser-52 or Ser-53). Ser-53 phosphorylation site is important for splicing and translation stimulation activity in vitro.

The protein localises to the nucleus. Its subcellular location is the nucleus speckle. The protein resides in the cytoplasm. Its function is as follows. Part of pre- and post-splicing multiprotein mRNP complexes. Auxiliary component of the splicing-dependent multiprotein exon junction complex (EJC) deposited at splice junction on mRNAs. The EJC is a dynamic structure consisting of core proteins and several peripheral nuclear and cytoplasmic associated factors that join the complex only transiently either during EJC assembly or during subsequent mRNA metabolism. Component of the ASAP and PSAP complexes which bind RNA in a sequence-independent manner and are proposed to be recruited to the EJC prior to or during the splicing process and to regulate specific excision of introns in specific transcription subsets. The ASAP complex can inhibit RNA processing during in vitro splicing reactions. The ASAP complex promotes apoptosis and is disassembled after induction of apoptosis. Enhances the formation of the ATP-dependent A complex of the spliceosome. Involved in both constitutive splicing and, in association with SRP54 and TRA2B/SFRS10, in distinctive modulation of alternative splicing in a substrate-dependent manner. Involved in the splicing modulation of BCL2L1/Bcl-X (and probably other apoptotic genes); specifically inhibits formation of proapoptotic isoforms such as Bcl-X(S); the activity is different from the established EJC assembly and function. Participates in mRNA 3'-end cleavage. Involved in UPF2-dependent nonsense-mediated decay (NMD) of mRNAs containing premature stop codons. Also mediates increase of mRNA abundance and translational efficiency. Binds spliced mRNA 20-25 nt upstream of exon-exon junctions. The protein is RNA-binding protein with serine-rich domain 1 (Rnps1) of Rattus norvegicus (Rat).